The chain runs to 418 residues: Glucose-1-phosphate adenylyltransferase (418 aa).

Alpha-D-glucose 1-phosphate is bound by residues Tyr104, Gly169, 184–185 (EK), and Ser202.

Belongs to the bacterial/plant glucose-1-phosphate adenylyltransferase family. As to quaternary structure, homotetramer.

It catalyses the reaction alpha-D-glucose 1-phosphate + ATP + H(+) = ADP-alpha-D-glucose + diphosphate. The protein operates within glycan biosynthesis; glycogen biosynthesis. In terms of biological role, involved in the biosynthesis of ADP-glucose, a building block required for the elongation reactions to produce glycogen. Catalyzes the reaction between ATP and alpha-D-glucose 1-phosphate (G1P) to produce pyrophosphate and ADP-Glc. This chain is Glucose-1-phosphate adenylyltransferase, found in Jannaschia sp. (strain CCS1).